Consider the following 100-residue polypeptide: Urease subunit gamma (100 aa).

This sequence belongs to the urease gamma subunit family. In terms of assembly, heterotrimer of UreA (gamma), UreB (beta) and UreC (alpha) subunits. Three heterotrimers associate to form the active enzyme.

The protein localises to the cytoplasm. It catalyses the reaction urea + 2 H2O + H(+) = hydrogencarbonate + 2 NH4(+). It participates in nitrogen metabolism; urea degradation; CO(2) and NH(3) from urea (urease route): step 1/1. This Methylobacillus flagellatus (strain ATCC 51484 / DSM 6875 / VKM B-1610 / KT) protein is Urease subunit gamma.